Here is a 264-residue protein sequence, read N- to C-terminus: Thiazole synthase (264 aa).

The Schiff-base intermediate with DXP role is filled by Lys-98. Residues Gly-159, 185 to 186 (AG), and 207 to 208 (AS) each bind 1-deoxy-D-xylulose 5-phosphate. A disordered region spans residues 243-264 (HFAEASSPPEGRAHLDPERPAF). The segment covering 253–264 (GRAHLDPERPAF) has biased composition (basic and acidic residues).

This sequence belongs to the ThiG family. In terms of assembly, homotetramer. Forms heterodimers with either ThiH or ThiS.

Its subcellular location is the cytoplasm. It catalyses the reaction [ThiS sulfur-carrier protein]-C-terminal-Gly-aminoethanethioate + 2-iminoacetate + 1-deoxy-D-xylulose 5-phosphate = [ThiS sulfur-carrier protein]-C-terminal Gly-Gly + 2-[(2R,5Z)-2-carboxy-4-methylthiazol-5(2H)-ylidene]ethyl phosphate + 2 H2O + H(+). It functions in the pathway cofactor biosynthesis; thiamine diphosphate biosynthesis. Its function is as follows. Catalyzes the rearrangement of 1-deoxy-D-xylulose 5-phosphate (DXP) to produce the thiazole phosphate moiety of thiamine. Sulfur is provided by the thiocarboxylate moiety of the carrier protein ThiS. In vitro, sulfur can be provided by H(2)S. This Streptomyces avermitilis (strain ATCC 31267 / DSM 46492 / JCM 5070 / NBRC 14893 / NCIMB 12804 / NRRL 8165 / MA-4680) protein is Thiazole synthase.